Here is a 169-residue protein sequence, read N- to C-terminus: MEPEALETCPYNPHHRIPLSRFQYHLASCRRKNPKKAKKMASCKYNACHVVPIKKLEEHEAACVNKSTMEEEDSLSPLKVSLPNAGQKGNRNASPVSPRLPNPDLWNVDSTNCHPMFVLKSFIPQKLVCESDTRESETDDHNPIPDCPRRRSSDRESEPPAEDTSLLKA.

2 CHHC U11-48K-type zinc fingers span residues 6–33 and 40–67; these read LETC…RRKN and MASC…VNKS. Zn(2+) is bound by residues Cys9, His15, His25, Cys29, Cys43, His49, His59, and Cys63. 2 disordered regions span residues 67 to 103 and 131 to 169; these read STME…LPNP and SDTR…LLKA. Residues 131–158 are compositionally biased toward basic and acidic residues; the sequence is SDTRESETDDHNPIPDCPRRRSSDRESE.

It belongs to the UPF0224 (FAM112) family.

The protein is Gametocyte-specific factor 1-like (GTSF1L) of Bos taurus (Bovine).